Consider the following 208-residue polypeptide: Glutathione S-transferase GstB (208 aa).

In terms of domain architecture, GST N-terminal spans 1 to 83 (MITLWGRNNS…YLAAQYGQKR (83 aa)). Residues asparagine 12, asparagine 39, valine 53, and 67–68 (ES) each bind glutathione. In terms of domain architecture, GST C-terminal spans 88–208 (SPARRAEAEK…VRKVVMIPVS (121 aa)).

This sequence belongs to the GST superfamily.

It catalyses the reaction RX + glutathione = an S-substituted glutathione + a halide anion + H(+). Functionally, conjugation of reduced glutathione to a wide number of exogenous and endogenous hydrophobic electrophiles. In Escherichia coli O6:H1 (strain CFT073 / ATCC 700928 / UPEC), this protein is Glutathione S-transferase GstB (gstB).